The sequence spans 1071 residues: Exportin-1 (1071 aa).

Residues 1 to 679 form a necessary for HTLV-1 Rex-mediated mRNA export region; the sequence is MPAIMTMLAD…QQATKNVDIL (679 aa). The 67-residue stretch at 46–112 folds into the Importin N-terminal domain; that stretch reads AQEVLTHLKE…KKYVVGLIIK (67 aa). 6 HEAT repeats span residues 217 to 240, 241 to 277, 354 to 472, 515 to 553, 560 to 597, and 602 to 639; these read QNAPLVHATLETLLRFLNWIPLGY, IFETKLISTLIYKFLNVPMFRNVSLKCLTEIAGVSVS, MLLV…YVDT, RFLVTVIKDLLGLCEQKRGKDNKAIIASNIMYIVGQYPR, KFLKTVVNKLFEFMHETHDGVQDMACDTFIKIAQKCRR, and VQVGEVMPFIDEILNNINTIICDLQPQQVHTFYEAVGY. The segment at 327 to 450 is interaction with Ran and nuclear export complex formation; sequence CTFLKEHDQL…VREFMKDTDS (124 aa). Ser-391 is subject to Phosphoserine. The tract at residues 411-414 is necessary for HTLV-1 Rex multimerization; that stretch reads PMLF. The segment at 411–481 is interaction with RANBP3; it reads PMLFKVRLLM…TERIMTEKLH (71 aa). Residue Lys-446 is modified to N6-acetyllysine. Thr-448 carries the post-translational modification Phosphothreonine. Residue Ser-450 is modified to Phosphoserine. Residue Tyr-454 is modified to Phosphotyrosine. An N6-acetyllysine modification is found at Lys-693. 4 HEAT repeats span residues 775 to 813, 885 to 916, 917 to 954, and 1002 to 1039; these read NFVPPLLDAVLIDYQRNVPAAREPEVLSTMAIIVNKLGG, TMRNVADTGLQILFTLLQNVAQEEAAAQSFYQ, TYFCDILQHIFSVVTDTSHTAGLTMHASILAYMFNLVE, and FSLNQDIPAFKEHLRDFLVQIKEFAGEDTSDLFLEERE. An interaction with HIV-1 Rev region spans residues 800–820; it reads VLSTMAIIVNKLGGHITAEIP. Ser-1031 is modified (phosphoserine).

It belongs to the exportin family. As to quaternary structure, found in a U snRNA export complex with PHAX/RNUXA, NCBP1/CBP80, NCBP2/CBP20, RAN, XPO1 and m7G-capped RNA. Component of a nuclear export receptor complex composed of KPNB1, RAN, SNUPN and XPO1. Found in a trimeric export complex with SNUPN, RAN and XPO1. Found in a nuclear export complex with RANBP3 and RAN. Found in a 60S ribosomal subunit export complex with NMD3, RAN, XPO1. Interacts with DDX3X, NMD3, NUP42, NUP88, NUP214, RANBP3 and TERT. Interacts with NEMF (via its N-terminus). Interacts with the monomeric form of BIRC5/survivin deacetylated at 'Lys-129'. Interacts with DTNBP1 and SERTAD2; the interactions translocate DTNBP1 and SERTAD2 out of the nucleus. Interacts with ATF2. Interacts with SLC35G1 and STIM1. Interacts with DCAF8. Interacts with CPEB3. Interacts with HAX1. Interacts with BOK; translocates to the cytoplasm. Interacts with HSP90AB1. Interacts with LRPPRC; interacts with LRPPRC alone and also when LRPPRC is in complex with EIF4E and with EIF4E sensitivity element (4ESE)-containing mRNAs to form an EIF4E-dependent mRNA export complex. (Microbial infection) Interacts with HIV-1 Rev. In terms of assembly, (Microbial infection) Interacts with HTLV-1 Rex. As to quaternary structure, (Microbial infection) Interacts with influenza A nucleoprotein. (Microbial infection) Interacts with Epstein-Barr virus protein BMLF1. In terms of assembly, (Microbial infection) Part of a tetrameric complex composed of CRM1, importin alpha/beta dimer and the Venezuelan equine encephalitis virus (VEEV) capsid; this complex blocks the receptor-mediated transport through the nuclear pore. As to quaternary structure, (Microbial infection) Interacts with SARS-CoV virus protein ORF9b; this interaction mediates protein ORF9b export out of the nucleus. In terms of tissue distribution, expressed in heart, brain, placenta, lung, liver, skeletal muscle, pancreas, spleen, thymus, prostate, testis, ovary, small intestine, colon and peripheral blood leukocytes. Not expressed in the kidney.

It localises to the cytoplasm. It is found in the nucleus. The protein resides in the nucleoplasm. The protein localises to the cajal body. Its subcellular location is the nucleolus. In terms of biological role, mediates the nuclear export of cellular proteins (cargos) bearing a leucine-rich nuclear export signal (NES) and of RNAs. In the nucleus, in association with RANBP3, binds cooperatively to the NES on its target protein and to the GTPase RAN in its active GTP-bound form (Ran-GTP). Docking of this complex to the nuclear pore complex (NPC) is mediated through binding to nucleoporins. Upon transit of a nuclear export complex into the cytoplasm, disassembling of the complex and hydrolysis of Ran-GTP to Ran-GDP (induced by RANBP1 and RANGAP1, respectively) cause release of the cargo from the export receptor. The directionality of nuclear export is thought to be conferred by an asymmetric distribution of the GTP- and GDP-bound forms of Ran between the cytoplasm and nucleus. Involved in U3 snoRNA transport from Cajal bodies to nucleoli. Binds to late precursor U3 snoRNA bearing a TMG cap. Functionally, (Microbial infection) Mediates the export of unspliced or incompletely spliced RNAs out of the nucleus from different viruses including HIV-1, HTLV-1 and influenza A. Interacts with, and mediates the nuclear export of HIV-1 Rev and HTLV-1 Rex proteins. Involved in HTLV-1 Rex multimerization. The polypeptide is Exportin-1 (XPO1) (Homo sapiens (Human)).